Here is a 264-residue protein sequence, read N- to C-terminus: Ribonuclease HII (264 aa).

The 192-residue stretch at 33-224 folds into the RNase H type-2 domain; the sequence is GPVAGVDEVG…VRRVASGSNT (192 aa). Asp-39, Glu-40, and Asp-133 together coordinate a divalent metal cation. The interval 222–264 is disordered; the sequence is SNTAEVADGQPDPRDGTAQTGEGRWSKSSHPATMRATGRAQGT.

Belongs to the RNase HII family. Requires Mn(2+) as cofactor. It depends on Mg(2+) as a cofactor.

It localises to the cytoplasm. It carries out the reaction Endonucleolytic cleavage to 5'-phosphomonoester.. Its function is as follows. Endonuclease that specifically degrades the RNA of RNA-DNA hybrids. This is Ribonuclease HII from Mycobacterium bovis (strain ATCC BAA-935 / AF2122/97).